A 342-amino-acid polypeptide reads, in one-letter code: Delta(6)-protoilludene synthase 8 (342 aa).

Aspartate 81 serves as a coordination point for Mg(2+). The short motif at arginine 93–aspartate 97 is the DDXXD motif element. Positions 217, 221, and 225 each coordinate Mg(2+). The short motif at asparagine 217–glutamate 225 is the NSE/DTE motif element. Arginine 305 and tyrosine 306 together coordinate (2E,6E)-farnesyl diphosphate.

It belongs to the terpene synthase family. Mg(2+) serves as cofactor.

The enzyme catalyses (2E,6E)-farnesyl diphosphate = Delta(6)-protoilludene + diphosphate. Its function is as follows. Terpene cyclase that catalyzes the cyclization of farnesyl diphosphate (FPP) to delta(6)-protoilludene. This Postia placenta (strain ATCC 44394 / Madison 698-R) (Brown rot fungus) protein is Delta(6)-protoilludene synthase 8.